Reading from the N-terminus, the 130-residue chain is DNA-directed RNA polymerase subunit omega (130 aa).

The interval 109 to 130 is disordered; it reads EEELLKGLEGLAPPEEQPEEDE.

This sequence belongs to the RNA polymerase subunit omega family. In terms of assembly, the RNAP catalytic core consists of 2 alpha, 1 beta, 1 beta' and 1 omega subunit. When a sigma factor is associated with the core the holoenzyme is formed, which can initiate transcription.

It carries out the reaction RNA(n) + a ribonucleoside 5'-triphosphate = RNA(n+1) + diphosphate. Its function is as follows. Promotes RNA polymerase assembly. Latches the N- and C-terminal regions of the beta' subunit thereby facilitating its interaction with the beta and alpha subunits. In Rhodopseudomonas palustris (strain BisA53), this protein is DNA-directed RNA polymerase subunit omega.